Here is a 197-residue protein sequence, read N- to C-terminus: NADH-quinone oxidoreductase subunit B (197 aa).

4 residues coordinate [4Fe-4S] cluster: Cys76, Cys77, Cys141, and Cys171.

Belongs to the complex I 20 kDa subunit family. In terms of assembly, NDH-1 is composed of 14 different subunits. Subunits NuoB, C, D, E, F, and G constitute the peripheral sector of the complex. Requires [4Fe-4S] cluster as cofactor.

Its subcellular location is the cell inner membrane. The catalysed reaction is a quinone + NADH + 5 H(+)(in) = a quinol + NAD(+) + 4 H(+)(out). Functionally, NDH-1 shuttles electrons from NADH, via FMN and iron-sulfur (Fe-S) centers, to quinones in the respiratory chain. The immediate electron acceptor for the enzyme in this species is believed to be ubiquinone. Couples the redox reaction to proton translocation (for every two electrons transferred, four hydrogen ions are translocated across the cytoplasmic membrane), and thus conserves the redox energy in a proton gradient. This chain is NADH-quinone oxidoreductase subunit B, found in Methylobacterium nodulans (strain LMG 21967 / CNCM I-2342 / ORS 2060).